A 75-amino-acid polypeptide reads, in one-letter code: Large ribosomal subunit protein bL31 (75 aa).

It belongs to the bacterial ribosomal protein bL31 family. Type A subfamily. As to quaternary structure, part of the 50S ribosomal subunit.

Its function is as follows. Binds the 23S rRNA. This chain is Large ribosomal subunit protein bL31, found in Rhodopseudomonas palustris (strain BisB5).